Reading from the N-terminus, the 211-residue chain is Uridine kinase (211 aa).

15–22 contacts ATP; sequence GGSGSGKT.

It belongs to the uridine kinase family.

Its subcellular location is the cytoplasm. The catalysed reaction is uridine + ATP = UMP + ADP + H(+). The enzyme catalyses cytidine + ATP = CMP + ADP + H(+). Its pathway is pyrimidine metabolism; CTP biosynthesis via salvage pathway; CTP from cytidine: step 1/3. It functions in the pathway pyrimidine metabolism; UMP biosynthesis via salvage pathway; UMP from uridine: step 1/1. The polypeptide is Uridine kinase (Lactobacillus helveticus (strain DPC 4571)).